A 336-amino-acid polypeptide reads, in one-letter code: C2H2 finger domain transcription factor mtfA (336 aa).

The disordered stretch occupies residues 1–245 (MDVASLISPS…PSPGHQQMIS (245 aa)). Polar residues-rich tracts occupy residues 7-29 (ISPS…SSAS) and 36-56 (EQST…YSRT). Low complexity predominate over residues 136–149 (SPSTSSVSAASSSA). Positions 168 to 181 (TDRSSISSQGSVQH) are enriched in polar residues. Over residues 182-210 (AASAPYASPAPSVSSFSSPIEPSTPSTAA) the composition is skewed to low complexity. Positions 216 to 245 (PAPNTFQNPSPFPQTSTASLPSPGHQQMIS) are enriched in polar residues. 2 C2H2-type zinc fingers span residues 272 to 294 (YICR…SHSH) and 300 to 325 (FRCT…RGCH).

The protein resides in the nucleus. Functionally, transcription factor that controls morphogenesis and virulence. Acts as a positive regulator of gliotixin and protease production. The sequence is that of C2H2 finger domain transcription factor mtfA from Aspergillus fumigatus (strain CBS 144.89 / FGSC A1163 / CEA10) (Neosartorya fumigata).